A 302-amino-acid chain; its full sequence is Glycine--tRNA ligase alpha subunit (302 aa).

This sequence belongs to the class-II aminoacyl-tRNA synthetase family. Tetramer of two alpha and two beta subunits.

The protein localises to the cytoplasm. It catalyses the reaction tRNA(Gly) + glycine + ATP = glycyl-tRNA(Gly) + AMP + diphosphate. This chain is Glycine--tRNA ligase alpha subunit, found in Xanthomonas oryzae pv. oryzae (strain PXO99A).